The following is a 952-amino-acid chain: MKSQKIGSMILLIGILLAIFNFAYSDDDIERFSINPEKPISFTSDQPGFPTSADFPIGSILANSFYSFGGDVNYFQLNISLMEEFSKDGNTGSQATWNQYTSVPVSPISSAVTANRVYTMSIGSLNRVKKGDITSMESTDFLNDEKYSSLVTTLNGGVSYGDDVFFLSSKSATGEAVLIHINDTATGTFGTSSYDEILLDAAINDPSSITVDSKLGLAFIGDSDGDILVFNMTLKAKIAIYSNSSIANLRSSGVVDEERQLLYICGQAGGMNSYITQVDIFHYSATDITLLHSFTILGSLCPSAGIDVKGGQLFFSTTTSSGSQLIGTDTSGGNTGSLSENIANTQSVAISVDSITKTISVFYPDSVFYGTFKSICPSDCSGHGECNYGTCVCDHNYQGQGCEEELCLTLNNCTGTDNGKCENGFCYCSSEWEGAQCEIRRCKDSCNGYGTCNTANYTCVCDSAHMGETCNELVPPPPCTYYTDSESCLSRTTCGWCEVDGLCKEGDRYGPFEGFCRTWFFDTNVETGVIALACIFIAFVGILYIIDIGTTVPIDIKRAKDYAEENKSGQFPKATHEEASVLWWRDQRSHKAWTFMDQFQLISLVSHIGVVFPSRFISFTEYLDWSNLGIPLPPSINPPQIWSVPTDWTSNTARTILSMAQYENSLGSGDLYLLPNILFWFGLLLGVFLVPLLLAYAIISFMESLIHWKEVVTNRLIHVLVRILTFGYIGVLIAASFAMVTPLHDYRIIIPGAIIFVLYGIGLPIAIWFLLAVPEARLHNPTFKQRFGCLYVHYKPKTDHRFVVFMFIKRFIMAVIIGILSFKPMTNYPLTGTDLAVPIVQVVVIDIALIGYAVLLFIRKPYFDHYQLWLEYLLTAINIVTVSLSLTHIKSPSAAGELIACLIQALALVACIAAYVVAWLQMRSSFIKKVKKYLCCCCKSSKSSGEIDLSKK.

An N-terminal signal peptide occupies residues 1 to 25; sequence MKSQKIGSMILLIGILLAIFNFAYS. Residues 26 to 527 lie on the Extracellular side of the membrane; sequence DDDIERFSIN…TWFFDTNVET (502 aa). 5 N-linked (GlcNAc...) asparagine glycosylation sites follow: asparagine 78, asparagine 182, asparagine 231, asparagine 243, and asparagine 412. One can recognise an EGF-like domain in the interval 438 to 471; it reads EIRRCKDSCNGYGTCNTANYTCVCDSAHMGETCN. Disulfide bonds link cysteine 442-cysteine 452, cysteine 446-cysteine 459, and cysteine 461-cysteine 470. N-linked (GlcNAc...) asparagine glycosylation is present at asparagine 456. The chain crosses the membrane as a helical span at residues 528 to 548; that stretch reads GVIALACIFIAFVGILYIIDI. Residues 549-591 lie on the Cytoplasmic side of the membrane; it reads GTTVPIDIKRAKDYAEENKSGQFPKATHEEASVLWWRDQRSHK. The helical transmembrane segment at 592-612 threads the bilayer; the sequence is AWTFMDQFQLISLVSHIGVVF. Over 613–678 the chain is Extracellular; it reads PSRFISFTEY…GDLYLLPNIL (66 aa). The chain crosses the membrane as a helical span at residues 679–699; sequence FWFGLLLGVFLVPLLLAYAII. The Cytoplasmic segment spans residues 700–722; the sequence is SFMESLIHWKEVVTNRLIHVLVR. Residues 723–743 traverse the membrane as a helical segment; the sequence is ILTFGYIGVLIAASFAMVTPL. Residues 744 to 752 are Extracellular-facing; it reads HDYRIIIPG. The chain crosses the membrane as a helical span at residues 753–773; that stretch reads AIIFVLYGIGLPIAIWFLLAV. Residues 774–801 lie on the Cytoplasmic side of the membrane; that stretch reads PEARLHNPTFKQRFGCLYVHYKPKTDHR. A helical transmembrane segment spans residues 802–822; it reads FVVFMFIKRFIMAVIIGILSF. At 823–837 the chain is on the extracellular side; it reads KPMTNYPLTGTDLAV. The helical transmembrane segment at 838–858 threads the bilayer; the sequence is PIVQVVVIDIALIGYAVLLFI. The Cytoplasmic portion of the chain corresponds to 859-868; it reads RKPYFDHYQL. The helical transmembrane segment at 869-889 threads the bilayer; sequence WLEYLLTAINIVTVSLSLTHI. At 890–897 the chain is on the extracellular side; the sequence is KSPSAAGE. Residues 898-918 traverse the membrane as a helical segment; sequence LIACLIQALALVACIAAYVVA. Over 919–952 the chain is Cytoplasmic; that stretch reads WLQMRSSFIKKVKKYLCCCCKSSKSSGEIDLSKK.

It is found in the cell membrane. Its function is as follows. Involved in substrate adhesion, myosin-independent cytokinesis, organization of actin cytoskeleton, and phagocytosis. This Dictyostelium discoideum (Social amoeba) protein is Substrate-adhesion molecule (sadA).